Reading from the N-terminus, the 730-residue chain is Double-strand break repair protein MRE11 (730 aa).

The Mn(2+) site is built by Asp-17, His-19, Asp-57, and Asn-124. The active-site Proton donor is the His-125. Residues His-213, His-241, and His-243 each contribute to the Mn(2+) site. The segment at 521–730 is disordered; that stretch reads LSGQQKQAQR…SMPARKSKRY (210 aa). Over residues 581–591 the composition is skewed to acidic residues; that stretch reads GDEDNLFEEEE. A compositionally biased stretch (low complexity) spans 595-633; that stretch reads KTTAKRAPTTRATRKTAAATRATTATKASAPAKKSIAAP. A compositionally biased stretch (acidic residues) spans 645 to 659; that stretch reads SAEEEEDVIMDDDDD. Residues 662–672 are compositionally biased toward pro residues; it reads PAPPVKAPPPK. Positions 685-704 are enriched in polar residues; it reads TRQTTLNFSQAERPTRTTQK. Residues 708–719 show a composition bias toward acidic residues; sequence ISDDEISEDDAF.

It belongs to the MRE11/RAD32 family. As to quaternary structure, component of the MRN complex composed of two heterodimers RAD50 and MRE11 associated with a single NBS1. Requires Mn(2+) as cofactor.

The protein localises to the nucleus. It is found in the chromosome. Its subcellular location is the telomere. Functionally, core component of the MRN complex, which plays a central role in double-strand break (DSB) repair, DNA recombination, maintenance of telomere integrity and meiosis. The MRN complex is involved in the repair of DNA double-strand breaks (DSBs) via homologous recombination (HR), an error-free mechanism which primarily occurs during S and G2 phases. The complex (1) mediates the end resection of damaged DNA, which generates proper single-stranded DNA, a key initial steps in HR, and is (2) required for the recruitment of other repair factors and efficient activation of ATM and ATR upon DNA damage. Within the MRN complex, MRE11 possesses both single-strand endonuclease activity and double-strand-specific 3'-5' exonuclease activity. MRE11 first endonucleolytically cleaves the 5' strand at DNA DSB ends to prevent non-homologous end joining (NHEJ) and licence HR. It then generates a single-stranded DNA gap via 3' to 5' exonucleolytic degradation, which is required for single-strand invasion and recombination. This Chaetomium thermophilum (strain DSM 1495 / CBS 144.50 / IMI 039719) (Thermochaetoides thermophila) protein is Double-strand break repair protein MRE11.